The primary structure comprises 310 residues: Oxygen-dependent coproporphyrinogen-III oxidase (310 aa).

Ser92 provides a ligand contact to substrate. Positions 96 and 106 each coordinate a divalent metal cation. His106 functions as the Proton donor in the catalytic mechanism. A substrate-binding site is contributed by 108 to 110 (NVR). 2 residues coordinate a divalent metal cation: His145 and His175. The important for dimerization stretch occupies residues 240-275 (YVEFNLIWDRGTLFGLQSGGRTESILMSMPPLARWE). 258–260 (GGR) serves as a coordination point for substrate.

It belongs to the aerobic coproporphyrinogen-III oxidase family. Homodimer. The cofactor is a divalent metal cation.

The protein resides in the cytoplasm. The catalysed reaction is coproporphyrinogen III + O2 + 2 H(+) = protoporphyrinogen IX + 2 CO2 + 2 H2O. Its pathway is porphyrin-containing compound metabolism; protoporphyrin-IX biosynthesis; protoporphyrinogen-IX from coproporphyrinogen-III (O2 route): step 1/1. Functionally, involved in the heme biosynthesis. Catalyzes the aerobic oxidative decarboxylation of propionate groups of rings A and B of coproporphyrinogen-III to yield the vinyl groups in protoporphyrinogen-IX. This is Oxygen-dependent coproporphyrinogen-III oxidase from Pectobacterium atrosepticum (strain SCRI 1043 / ATCC BAA-672) (Erwinia carotovora subsp. atroseptica).